We begin with the raw amino-acid sequence, 260 residues long: Hydroxyethylthiazole kinase (260 aa).

Methionine 38 contributes to the substrate binding site. ATP contacts are provided by lysine 114 and serine 161. A substrate-binding site is contributed by glycine 188.

This sequence belongs to the Thz kinase family. It depends on Mg(2+) as a cofactor.

It carries out the reaction 5-(2-hydroxyethyl)-4-methylthiazole + ATP = 4-methyl-5-(2-phosphooxyethyl)-thiazole + ADP + H(+). The protein operates within cofactor biosynthesis; thiamine diphosphate biosynthesis; 4-methyl-5-(2-phosphoethyl)-thiazole from 5-(2-hydroxyethyl)-4-methylthiazole: step 1/1. Its function is as follows. Catalyzes the phosphorylation of the hydroxyl group of 4-methyl-5-beta-hydroxyethylthiazole (THZ). The polypeptide is Hydroxyethylthiazole kinase (Campylobacter lari (strain RM2100 / D67 / ATCC BAA-1060)).